The chain runs to 448 residues: NADP-specific glutamate dehydrogenase (448 aa).

Residues K88, Q109, and K112 each coordinate substrate. K124 serves as the catalytic Proton donor. Residue G163 participates in substrate binding. 2 residues coordinate NADP(+): T207 and N238. S375 lines the substrate pocket.

Belongs to the Glu/Leu/Phe/Val dehydrogenases family. As to quaternary structure, homohexamer.

The enzyme catalyses L-glutamate + NADP(+) + H2O = 2-oxoglutarate + NH4(+) + NADPH + H(+). In terms of biological role, catalyzes the reversible oxidative deamination of glutamate to alpha-ketoglutarate and ammonia. The polypeptide is NADP-specific glutamate dehydrogenase (gdhA) (Psychrobacter sp. (strain TAD1)).